The sequence spans 25 residues: Tubulin alpha chain (25 aa).

A GTP-binding site is contributed by glutamine 11.

The protein belongs to the tubulin family. In terms of assembly, dimer of alpha and beta chains. A typical microtubule is a hollow water-filled tube with an outer diameter of 25 nm and an inner diameter of 15 nM. Alpha-beta heterodimers associate head-to-tail to form protofilaments running lengthwise along the microtubule wall with the beta-tubulin subunit facing the microtubule plus end conferring a structural polarity. Microtubules usually have 13 protofilaments but different protofilament numbers can be found in some organisms and specialized cells. Mg(2+) is required as a cofactor.

It is found in the cytoplasm. Its subcellular location is the cytoskeleton. It catalyses the reaction GTP + H2O = GDP + phosphate + H(+). Its function is as follows. Tubulin is the major constituent of microtubules, a cylinder consisting of laterally associated linear protofilaments composed of alpha- and beta-tubulin heterodimers. Microtubules grow by the addition of GTP-tubulin dimers to the microtubule end, where a stabilizing cap forms. Below the cap, tubulin dimers are in GDP-bound state, owing to GTPase activity of alpha-tubulin. In Leptomonas seymouri, this protein is Tubulin alpha chain.